A 52-amino-acid chain; its full sequence is UPF0057 membrane protein At1g57550 (52 aa).

2 consecutive transmembrane segments (helical) span residues 4-24 (FLEVLCAIFIPPVGVFLRYGL) and 30-50 (VCLLLTLFAFIPGLIYAIYVL).

It belongs to the UPF0057 (PMP3) family.

It localises to the membrane. This Arabidopsis thaliana (Mouse-ear cress) protein is UPF0057 membrane protein At1g57550.